The chain runs to 498 residues: Glutamate--tRNA ligase (498 aa).

Residues 11–21 (PSPTGHLHIGN) carry the 'HIGH' region motif. Residues 260 to 264 (KLSKR) carry the 'KMSKS' region motif. Lysine 263 serves as a coordination point for ATP.

This sequence belongs to the class-I aminoacyl-tRNA synthetase family. Glutamate--tRNA ligase type 1 subfamily. As to quaternary structure, monomer.

Its subcellular location is the cytoplasm. It carries out the reaction tRNA(Glu) + L-glutamate + ATP = L-glutamyl-tRNA(Glu) + AMP + diphosphate. In terms of biological role, catalyzes the attachment of glutamate to tRNA(Glu) in a two-step reaction: glutamate is first activated by ATP to form Glu-AMP and then transferred to the acceptor end of tRNA(Glu). This chain is Glutamate--tRNA ligase, found in Leuconostoc mesenteroides subsp. mesenteroides (strain ATCC 8293 / DSM 20343 / BCRC 11652 / CCM 1803 / JCM 6124 / NCDO 523 / NBRC 100496 / NCIMB 8023 / NCTC 12954 / NRRL B-1118 / 37Y).